The chain runs to 429 residues: C4-dicarboxylate transport protein (429 aa).

Transmembrane regions (helical) follow at residues 9 to 29 (VLYV…HFYP), 45 to 65 (LIKM…IAGM), 79 to 99 (LLYF…ATHI), 149 to 169 (GEIL…AHLG), 185 to 205 (VLFG…FGAM), 223 to 243 (LIGT…GTIA), 308 to 328 (IYMT…LTWM), and 356 to 376 (AATL…ILGI).

This sequence belongs to the dicarboxylate/amino acid:cation symporter (DAACS) (TC 2.A.23) family.

The protein resides in the cell inner membrane. Its function is as follows. Responsible for the transport of dicarboxylates such as succinate, fumarate, and malate from the periplasm across the membrane. The polypeptide is C4-dicarboxylate transport protein (Burkholderia ambifaria (strain ATCC BAA-244 / DSM 16087 / CCUG 44356 / LMG 19182 / AMMD) (Burkholderia cepacia (strain AMMD))).